Consider the following 348-residue polypeptide: NADH-quinone oxidoreductase subunit H (348 aa).

The next 8 membrane-spanning stretches (helical) occupy residues Ile21–Ala41, Gly87–Ile107, Ile120–Gly140, Ile166–Val186, Ile193–Phe213, Asn258–Val278, Leu283–Phe303, and Trp323–Leu343.

It belongs to the complex I subunit 1 family. In terms of assembly, NDH-1 is composed of 14 different subunits. Subunits NuoA, H, J, K, L, M, N constitute the membrane sector of the complex.

The protein resides in the cell inner membrane. It catalyses the reaction a quinone + NADH + 5 H(+)(in) = a quinol + NAD(+) + 4 H(+)(out). In terms of biological role, NDH-1 shuttles electrons from NADH, via FMN and iron-sulfur (Fe-S) centers, to quinones in the respiratory chain. The immediate electron acceptor for the enzyme in this species is believed to be ubiquinone. Couples the redox reaction to proton translocation (for every two electrons transferred, four hydrogen ions are translocated across the cytoplasmic membrane), and thus conserves the redox energy in a proton gradient. This subunit may bind ubiquinone. The protein is NADH-quinone oxidoreductase subunit H of Rhizorhabdus wittichii (strain DSM 6014 / CCUG 31198 / JCM 15750 / NBRC 105917 / EY 4224 / RW1) (Sphingomonas wittichii).